Reading from the N-terminus, the 103-residue chain is Small ribosomal subunit protein uS10 (103 aa).

It belongs to the universal ribosomal protein uS10 family. As to quaternary structure, part of the 30S ribosomal subunit.

Its function is as follows. Involved in the binding of tRNA to the ribosomes. This Pseudomonas aeruginosa (strain LESB58) protein is Small ribosomal subunit protein uS10.